Here is a 1375-residue protein sequence, read N- to C-terminus: BNI1-related protein 1 (1375 aa).

Positions 94 to 490 constitute a GBD/FH3 domain; it reads CMPQDASLVE…YLIDSFQVST (397 aa). A coiled-coil region spans residues 520–601; that stretch reads QSDEIARRAV…ITTHQRLYDQ (82 aa). The residue at position 621 (serine 621) is a Phosphoserine. Positions 659 to 851 constitute an FH1 domain; the sequence is SSYLTDANNE…LVTPPAPPLP (193 aa). The disordered stretch occupies residues 661-684; sequence YLTDANNENESQNESEDKSKDSLF. Serine 751 is modified (phosphoserine). 3 disordered regions span residues 764-785, 817-839, and 1285-1309; these read KLPQLPPPPPPPPPPPLPQSLL, AVPPPPPPPPLPESLSMNKGPSN, and KSLLDMRTSSNKKSNGSDENDGEKV. Composition is skewed to pro residues over residues 767 to 781 and 818 to 828; these read QLPPPPPPPPPPPLP and VPPPPPPPPLP. Residues 868–1290 enclose the FH2 domain; it reads DLKPPPTEKR…YEQRKSLLDM (423 aa). Residues 1302–1336 enclose the DAD domain; it reads DENDGEKVNRDAVDLLISKLREVKKDPEPLRRRKS.

This sequence belongs to the formin homology family. BNI1 subfamily. Interacts with profilin at the FH1 domain.

In terms of biological role, may organize microtubules by mediating spindle positioning and movement in the budding process. Potential target of the RHO family members. The polypeptide is BNI1-related protein 1 (BNR1) (Saccharomyces cerevisiae (strain ATCC 204508 / S288c) (Baker's yeast)).